Consider the following 328-residue polypeptide: Peroxidase 25 (328 aa).

A signal peptide spans 1–26; sequence MGVYLGKYCYIMIIMLVLVLGKEVRS. Disulfide bonds link C38/C114, C71/C76, C120/C324, and C198/C230. H69 serves as the catalytic Proton acceptor. Ca(2+) contacts are provided by D70, V73, G75, D77, and S79. P161 provides a ligand contact to substrate. H191 is a heme b binding site. T192 is a binding site for Ca(2+). An N-linked (GlcNAc...) asparagine glycan is attached at N207. Positions 243, 246, and 251 each coordinate Ca(2+).

Belongs to the peroxidase family. Classical plant (class III) peroxidase subfamily. The cofactor is heme b. Ca(2+) serves as cofactor.

The protein resides in the secreted. It carries out the reaction 2 a phenolic donor + H2O2 = 2 a phenolic radical donor + 2 H2O. Functionally, removal of H(2)O(2), oxidation of toxic reductants, biosynthesis and degradation of lignin, suberization, auxin catabolism, response to environmental stresses such as wounding, pathogen attack and oxidative stress. These functions might be dependent on each isozyme/isoform in each plant tissue. The sequence is that of Peroxidase 25 (PER25) from Arabidopsis thaliana (Mouse-ear cress).